A 359-amino-acid chain; its full sequence is Lactosylceramide 4-alpha-galactosyltransferase (359 aa).

Residues 1–30 (MGISCSHLEETMSKPPDCLLRMLRGTPRQR) are Cytoplasmic-facing. A helical; Signal-anchor for type II membrane protein membrane pass occupies residues 31 to 51 (VFTFFIISFKFMFLISILIYW). The Lumenal portion of the chain corresponds to 52–359 (HTVGAPKDQR…TTHRAMKMYL (308 aa)). Positions 198–200 (DTD) match the DXD motif motif. N-linked (GlcNAc...) asparagine glycans are attached at residues Asn-209 and Asn-315.

The protein belongs to the glycosyltransferase 32 family.

It localises to the golgi apparatus membrane. It carries out the reaction a beta-D-Gal-(1-&gt;4)-beta-D-Glc-(1&lt;-&gt;1)-Cer(d18:1(4E)) + UDP-alpha-D-galactose = a globoside Gb3Cer (d18:1(4E)) + UDP + H(+). It catalyses the reaction a beta-D-Gal-(1&lt;-&gt;1')-ceramide + UDP-alpha-D-galactose = alpha-D-Gal-(1-&gt;4)-beta-D-Gal-(1&lt;-&gt;1')-Cer + UDP + H(+). The protein operates within glycolipid biosynthesis. Catalyzes the transfer of galactose from UDP-alpha-D-galactose to lactosylceramide/beta-D-galactosyl-(1-&gt;4)-beta-D-glucosyl-(1&lt;-&gt;1)-ceramide(d18:1(4E)) to produce globotriaosylceramide/globoside Gb3Cer (d18:1(4E)). Also able to transfer galactose to galactosylceramide/beta-D-Gal-(1&lt;-&gt;1')-Cer. Globoside Gb3Cer is a glycosphingolipid of the globo serie, one of the major types of neutral root structures of glycosphingolipids, that constitute a significant portion of mammalian cell membranes. This is Lactosylceramide 4-alpha-galactosyltransferase from Mus musculus (Mouse).